The chain runs to 47 residues: MAPLTLDLLAQLPEAYQLYAPTVDVLPLIPLLFFLLVFVWQAAVGFR.

Residues M1–A10 constitute a propeptide that is removed on maturation. A helical membrane pass occupies residues L26–F46.

The protein belongs to the PsbK family. In terms of assembly, PSII is composed of 1 copy each of membrane proteins PsbA, PsbB, PsbC, PsbD, PsbE, PsbF, PsbH, PsbI, PsbJ, PsbK, PsbL, PsbM, PsbT, PsbX, PsbY, Psb30/Ycf12, peripheral proteins PsbO, CyanoQ (PsbQ), PsbU, PsbV and a large number of cofactors. It forms dimeric complexes.

The protein resides in the cellular thylakoid membrane. Functionally, one of the components of the core complex of photosystem II (PSII). PSII is a light-driven water:plastoquinone oxidoreductase that uses light energy to abstract electrons from H(2)O, generating O(2) and a proton gradient subsequently used for ATP formation. It consists of a core antenna complex that captures photons, and an electron transfer chain that converts photonic excitation into a charge separation. The chain is Photosystem II reaction center protein K from Prochlorococcus marinus (strain SARG / CCMP1375 / SS120).